The following is a 1356-amino-acid chain: Collagen alpha-2(I) chain (1356 aa).

An N-terminal signal peptide occupies residues 1-22 (MLSFVDNRILLLLAVTSLLASC). The interval 22–1112 (CQSGGLKGPR…DQSGGYDEYR (1091 aa)) is disordered. Gln-23 and Gln-73 each carry pyrrolidone carboxylic acid. The propeptide at 23-72 (QSGGLKGPRGAKGPRGDRGPQGPNGRDGKAGLPGIAGPPGPPGLGGNFAA) is N-terminal propeptide. A compositionally biased stretch (gly residues) spans 76 to 88 (GGKGSDPGPGPMG). Lys-78 is modified (allysine). A 5-hydroxylysine; alternate modification is found at Lys-171. O-linked (Gal...) hydroxylysine; alternate glycosylation is present at Lys-171. Positions 219-248 (AGPAGPAGARGADGSTGPAGPAGPLGAAGP) are enriched in low complexity. Positions 259 to 280 (GEIGGAGSNGPSGPQGGRGEPG) are enriched in gly residues. The segment covering 281 to 315 (INGAVGPVGPVGNPGNNGINGAKGAAGLPGVAGAP) has biased composition (low complexity). The span at 317–327 (FPGPRGGPGPQ) shows a compositional bias: pro residues. Gly residues-rich tracts occupy residues 334 to 343 (GARGLGGDPG), 391 to 412 (GARG…GPIG), 418 to 427 (GATGPGGIRG), and 448 to 457 (GNSGQGGPPG). Residues 479-489 (PRGQPGNIGFP) show a composition bias toward low complexity. Residues 511–520 (GLRGGPGADG) are compositionally biased toward gly residues. Composition is skewed to low complexity over residues 521–564 (NNGA…AGKA) and 587–603 (NSGP…IGAR). Gly residues-rich tracts occupy residues 610-619 (GPDGGKGEPG) and 628-646 (GHQG…GTPG). Over residues 648–659 (KGEKGEGGHRGL) the composition is skewed to basic and acidic residues. Residues 716–731 (LPGFAGPPGSDGQSGP) show a composition bias toward low complexity. Over residues 736–745 (GPAGGKGDVG) the composition is skewed to gly residues. Composition is skewed to low complexity over residues 746–764 (PAGP…ASGP) and 776–786 (PSGLTGFPGAA). Gly residues predominate over residues 787–796 (GRVGGPGPAG). Residues 797–809 (IAGPPGSAGPAGK) show a composition bias toward low complexity. Gly residues predominate over residues 817–826 (GDPGPGGPQG). Low complexity predominate over residues 827–858 (EQGVVGPAGISGDKGPSGESGPPGAPGTAGPQ). The segment covering 877–886 (GLPGGPGAVG) has biased composition (gly residues). The span at 888–903 (PGRLGPAGASGPRGPA) shows a compositional bias: low complexity. A compositionally biased stretch (gly residues) spans 976–985 (GPTGNGGPVG). Positions 999–1013 (RGEKGGAGEKGDRGM) are enriched in basic and acidic residues. The segment covering 1083-1095 (AGPPGSPGLPGPA) has biased composition (pro residues). The propeptide at 1114-1356 (DQPSFRAKDY…GLDIGPVCFK (243 aa)) is C-terminal propeptide. Positions 1123–1356 (YEVDATIKSL…GLDIGPVCFK (234 aa)) constitute a Fibrillar collagen NC1 domain. 3 disulfides stabilise this stretch: Cys-1153–Cys-1185, Cys-1193–Cys-1354, and Cys-1262–Cys-1307. Positions 1171, 1173, 1174, 1176, and 1179 each coordinate Ca(2+). Asn-1257 carries N-linked (GlcNAc...) asparagine glycosylation.

The protein belongs to the fibrillar collagen family. In terms of assembly, trimers of one alpha 2(I) and two alpha 1(I) chains. In terms of processing, prolines at the third position of the tripeptide repeating unit (G-X-Y) are hydroxylated in some or all of the chains. Forms the fibrils of tendon, ligaments and bones. In bones the fibrils are mineralized with calcium hydroxyapatite.

The protein resides in the secreted. The protein localises to the extracellular space. It localises to the extracellular matrix. Its function is as follows. Type I collagen is a member of group I collagen (fibrillar forming collagen). The protein is Collagen alpha-2(I) chain (col1a2) of Oncorhynchus mykiss (Rainbow trout).